Reading from the N-terminus, the 430-residue chain is Serine--tRNA ligase (430 aa).

An L-serine-binding site is contributed by 238 to 240 (TAE). 269 to 271 (RRE) serves as a coordination point for ATP. Residue glutamate 292 coordinates L-serine. 356–359 (EISS) serves as a coordination point for ATP. Serine 392 contacts L-serine.

It belongs to the class-II aminoacyl-tRNA synthetase family. Type-1 seryl-tRNA synthetase subfamily. As to quaternary structure, homodimer. The tRNA molecule binds across the dimer.

Its subcellular location is the cytoplasm. It catalyses the reaction tRNA(Ser) + L-serine + ATP = L-seryl-tRNA(Ser) + AMP + diphosphate + H(+). The catalysed reaction is tRNA(Sec) + L-serine + ATP = L-seryl-tRNA(Sec) + AMP + diphosphate + H(+). Its pathway is aminoacyl-tRNA biosynthesis; selenocysteinyl-tRNA(Sec) biosynthesis; L-seryl-tRNA(Sec) from L-serine and tRNA(Sec): step 1/1. Its function is as follows. Catalyzes the attachment of serine to tRNA(Ser). Is also able to aminoacylate tRNA(Sec) with serine, to form the misacylated tRNA L-seryl-tRNA(Sec), which will be further converted into selenocysteinyl-tRNA(Sec). In Synechocystis sp. (strain ATCC 27184 / PCC 6803 / Kazusa), this protein is Serine--tRNA ligase.